The sequence spans 205 residues: High frequency lysogenization protein HflD homolog (205 aa).

The protein belongs to the HflD family.

It is found in the cytoplasm. Its subcellular location is the cell inner membrane. In Vibrio atlanticus (strain LGP32) (Vibrio splendidus (strain Mel32)), this protein is High frequency lysogenization protein HflD homolog.